A 265-amino-acid polypeptide reads, in one-letter code: Triosephosphate isomerase (265 aa).

Residue 8–10 (NWK) coordinates substrate. H103 functions as the Electrophile in the catalytic mechanism. E182 functions as the Proton acceptor in the catalytic mechanism. Residues G188, S226, and 247-248 (GG) contribute to the substrate site.

This sequence belongs to the triosephosphate isomerase family. In terms of assembly, homodimer.

The protein resides in the cytoplasm. It catalyses the reaction D-glyceraldehyde 3-phosphate = dihydroxyacetone phosphate. It functions in the pathway carbohydrate biosynthesis; gluconeogenesis. Its pathway is carbohydrate degradation; glycolysis; D-glyceraldehyde 3-phosphate from glycerone phosphate: step 1/1. Involved in the gluconeogenesis. Catalyzes stereospecifically the conversion of dihydroxyacetone phosphate (DHAP) to D-glyceraldehyde-3-phosphate (G3P). The sequence is that of Triosephosphate isomerase from Psychrobacter sp. (strain PRwf-1).